A 179-amino-acid polypeptide reads, in one-letter code: tRNA (cytidine(56)-2'-O)-methyltransferase (179 aa).

S-adenosyl-L-methionine-binding positions include Leu82, 112–116, and 130–137; these read GAEKV and VGNQPHSE.

It belongs to the aTrm56 family. In terms of assembly, homodimer.

It is found in the cytoplasm. It carries out the reaction cytidine(56) in tRNA + S-adenosyl-L-methionine = 2'-O-methylcytidine(56) in tRNA + S-adenosyl-L-homocysteine + H(+). In terms of biological role, specifically catalyzes the AdoMet-dependent 2'-O-ribose methylation of cytidine at position 56 in tRNAs. This chain is tRNA (cytidine(56)-2'-O)-methyltransferase, found in Methanococcus maripaludis (strain C7 / ATCC BAA-1331).